The following is a 43-amino-acid chain: Protein PsbN (43 aa).

The helical transmembrane segment at 5 to 27 (NLVAIFVSCLLVSLTGYALYTSF) threads the bilayer.

Belongs to the PsbN family.

It is found in the plastid. Its subcellular location is the chloroplast thylakoid membrane. Its function is as follows. May play a role in photosystem I and II biogenesis. In Ephedra sinica (Chinese ephedra), this protein is Protein PsbN.